Here is a 368-residue protein sequence, read N- to C-terminus: MIGWGDVYKVVAAMAPLYFALGLGYGSVRWWRLFTADQCDAVNRLVACFAVPFFAFDFAARIDPFALSYRVLAADALSKLAVALALAACAAAASTRCCGSGGGKRGGGGGFSWCITGFSLATLNNTLVVGVPLLDAMYGKWARDLIVQISVVQTIVYFPLLLLAFEVRRATTAAAAPPPPPTGTDDDDVEDGAAAAATAAAARRSLWPLVRAVWLKVARNPNVYAGVLGVAWACVTNRWHVETPSIIEGSVLIMSKTGVGLSMFSMGLFMALQDKIIVCGAGLTVLGMALRFVAGPAATAVGAFALGLRGDLLRLAIIQAALPQSITTFVFAKEYGLHAEILSTAVIFGTLASLPVLIVYYIVLGFIR.

10 helical membrane-spanning segments follow: residues 7-27 (VYKVVAAMAPLYFALGLGYGS), 39-59 (CDAVNRLVACFAVPFFAFDFA), 71-91 (VLAADALSKLAVALALAACAA), 114-134 (CITGFSLATLNNTLVVGVPLL), 145-165 (LIVQISVVQTIVYFPLLLLAF), 227-247 (VLGVAWACVTNRWHVETPSII), 251-271 (VLIMSKTGVGLSMFSMGLFMA), 286-306 (LGMALRFVAGPAATAVGAFAL), 312-332 (LLRLAIIQAALPQSITTFVFA), and 347-367 (IFGTLASLPVLIVYYIVLGFI).

This sequence belongs to the auxin efflux carrier (TC 2.A.69.1) family. Expressed at low levels in roots and shoot apex.

Its subcellular location is the membrane. Its function is as follows. May act as a component of the auxin efflux carrier. The sequence is that of Probable auxin efflux carrier component 5b from Oryza sativa subsp. japonica (Rice).